Reading from the N-terminus, the 265-residue chain is Polyphosphate glucokinase (265 aa).

Polar residues predominate over residues 1–18; the sequence is MTSTGPETSETPGATTQR. The disordered stretch occupies residues 1-22; the sequence is MTSTGPETSETPGATTQRHGFG. 24–29 provides a ligand contact to ATP; sequence DVGGSG.

The protein belongs to the ROK (NagC/XylR) family. Homodimer.

The catalysed reaction is [phosphate](n) + D-glucose = [phosphate](n-1) + D-glucose 6-phosphate + H(+). It catalyses the reaction D-glucose + ATP = D-glucose 6-phosphate + ADP + H(+). Catalyzes the phosphorylation of glucose using polyphosphate or ATP as the phosphoryl donor. Polyphosphate, rather than ATP, seems to be the major phosphate donor for the enzyme in M.tuberculosis. The chain is Polyphosphate glucokinase (ppgK) from Mycobacterium tuberculosis (strain CDC 1551 / Oshkosh).